A 395-amino-acid polypeptide reads, in one-letter code: MATVDRWLLPDGIEEVLPPEAARIEAARRQVLDLFQRWGYEFVVTPHIEYLESLLTGAGQDLDLRTFKVTDPLSGRQMGFRADITPQVARIDAHTLRREGPNRLCYAGSVLHAQPRALTTSRSPIQLGAELYGDASPASDIEVISLLVETLELAAVPDVHMDLGHVGIYRGLARAAGLSGEVEQQLFDALQRKAMDEIEALTAALPAGLGNMLRSLAELCGGREVLDLAQAALVEAPDAVHAALDELVAIADALELRYPELPLYFDLGELRGYNYHTGVVFAAFVPGEGGAIAQGGRYDDTGAVFGRARPATGFSTDLKTLVTLGDMRLDEAVRGVWAPDNHDLYLWQAVRRLRSEGERVVQALPGQSEADAREAGCDRLLALRDGRWQVAPLAS.

The protein belongs to the class-II aminoacyl-tRNA synthetase family. HisZ subfamily. In terms of assembly, heteromultimer composed of HisG and HisZ subunits.

The protein localises to the cytoplasm. It functions in the pathway amino-acid biosynthesis; L-histidine biosynthesis; L-histidine from 5-phospho-alpha-D-ribose 1-diphosphate: step 1/9. Its function is as follows. Required for the first step of histidine biosynthesis. May allow the feedback regulation of ATP phosphoribosyltransferase activity by histidine. This chain is ATP phosphoribosyltransferase regulatory subunit, found in Ectopseudomonas mendocina (strain ymp) (Pseudomonas mendocina).